The sequence spans 238 residues: Purine nucleoside phosphorylase DeoD-type (238 aa).

His4 serves as a coordination point for a purine D-ribonucleoside. Phosphate contacts are provided by residues Gly20, Arg24, Arg43, and 87–90 (RIGS). A purine D-ribonucleoside-binding positions include 181 to 183 (EME) and 205 to 206 (SD). Asp206 (proton donor) is an active-site residue.

It belongs to the PNP/UDP phosphorylase family. In terms of assembly, homohexamer; trimer of homodimers.

It catalyses the reaction a purine D-ribonucleoside + phosphate = a purine nucleobase + alpha-D-ribose 1-phosphate. The catalysed reaction is a purine 2'-deoxy-D-ribonucleoside + phosphate = a purine nucleobase + 2-deoxy-alpha-D-ribose 1-phosphate. Catalyzes the reversible phosphorolytic breakdown of the N-glycosidic bond in the beta-(deoxy)ribonucleoside molecules, with the formation of the corresponding free purine bases and pentose-1-phosphate. This chain is Purine nucleoside phosphorylase DeoD-type, found in Mycoplasma genitalium (strain ATCC 33530 / DSM 19775 / NCTC 10195 / G37) (Mycoplasmoides genitalium).